A 337-amino-acid chain; its full sequence is Phenylalanine--tRNA ligase alpha subunit (337 aa).

Glutamate 252 serves as a coordination point for Mg(2+).

The protein belongs to the class-II aminoacyl-tRNA synthetase family. Phe-tRNA synthetase alpha subunit type 1 subfamily. As to quaternary structure, tetramer of two alpha and two beta subunits. Requires Mg(2+) as cofactor.

It is found in the cytoplasm. The enzyme catalyses tRNA(Phe) + L-phenylalanine + ATP = L-phenylalanyl-tRNA(Phe) + AMP + diphosphate + H(+). The polypeptide is Phenylalanine--tRNA ligase alpha subunit (Saccharophagus degradans (strain 2-40 / ATCC 43961 / DSM 17024)).